The primary structure comprises 132 residues: uncharacterized protein (132 aa).

The N-terminal stretch at 1 to 35 (MSFEYRHYKREAKICTCRGGWAHVLLCIGVSQGAC) is a signal peptide. The tract at residues 91-132 (AHPGSHSDQPPGVPSRRKSRLERWSPSVSRSTSPPTEAPFCL) is disordered. Residues 115–125 (SPSVSRSTSPP) show a composition bias toward low complexity.

Its subcellular location is the secreted. This is an uncharacterized protein from Homo sapiens (Human).